A 317-amino-acid polypeptide reads, in one-letter code: Ribonuclease H2 subunit A (317 aa).

An RNase H type-2 domain is found at 43–270 (PCCLGVDEAG…AKDMLETKGG (228 aa)). A divalent metal cation-binding residues include D49, E50, and D166.

It belongs to the RNase HII family. Eukaryotic subfamily. The cofactor is Mn(2+). Mg(2+) serves as cofactor.

It catalyses the reaction Endonucleolytic cleavage to 5'-phosphomonoester.. In terms of biological role, endonuclease that specifically degrades the RNA of RNA-DNA hybrids. Participates in DNA replication. In Neurospora crassa (strain ATCC 24698 / 74-OR23-1A / CBS 708.71 / DSM 1257 / FGSC 987), this protein is Ribonuclease H2 subunit A (rnh-201).